Here is a 254-residue protein sequence, read N- to C-terminus: Alcohol dehydrogenase (254 aa).

NAD(+) is bound at residue 10 to 33; the sequence is FVAGLGGIGLDTSREIVKSGPKNL. S138 provides a ligand contact to substrate. The active-site Proton acceptor is Y151.

Belongs to the short-chain dehydrogenases/reductases (SDR) family. Homodimer.

The enzyme catalyses a primary alcohol + NAD(+) = an aldehyde + NADH + H(+). It carries out the reaction a secondary alcohol + NAD(+) = a ketone + NADH + H(+). The sequence is that of Alcohol dehydrogenase (Adh) from Drosophila hawaiiensis (Fruit fly).